The following is a 194-amino-acid chain: Small ribosomal subunit protein uS4c (194 aa).

In terms of domain architecture, S4 RNA-binding spans 82 to 143; it reads MRLDNILFRL…KQRSKALIQN (62 aa).

It belongs to the universal ribosomal protein uS4 family. Part of the 30S ribosomal subunit. Contacts protein S5. The interaction surface between S4 and S5 is involved in control of translational fidelity.

It localises to the plastid. The protein resides in the chloroplast. In terms of biological role, one of the primary rRNA binding proteins, it binds directly to 16S rRNA where it nucleates assembly of the body of the 30S subunit. Functionally, with S5 and S12 plays an important role in translational accuracy. The sequence is that of Small ribosomal subunit protein uS4c (rps4) from Sisyrinchium striatum (Satin flower).